Reading from the N-terminus, the 359-residue chain is Phosphoserine aminotransferase (359 aa).

Arginine 42 is an L-glutamate binding site. Pyridoxal 5'-phosphate contacts are provided by residues 76-77, tryptophan 102, threonine 151, aspartate 170, and glutamine 193; that span reads AS. Lysine 194 is subject to N6-(pyridoxal phosphate)lysine. Pyridoxal 5'-phosphate is bound at residue 235 to 236; the sequence is NT.

It belongs to the class-V pyridoxal-phosphate-dependent aminotransferase family. SerC subfamily. As to quaternary structure, homodimer. It depends on pyridoxal 5'-phosphate as a cofactor.

It localises to the cytoplasm. The enzyme catalyses O-phospho-L-serine + 2-oxoglutarate = 3-phosphooxypyruvate + L-glutamate. It catalyses the reaction 4-(phosphooxy)-L-threonine + 2-oxoglutarate = (R)-3-hydroxy-2-oxo-4-phosphooxybutanoate + L-glutamate. It participates in amino-acid biosynthesis; L-serine biosynthesis; L-serine from 3-phospho-D-glycerate: step 2/3. Its pathway is cofactor biosynthesis; pyridoxine 5'-phosphate biosynthesis; pyridoxine 5'-phosphate from D-erythrose 4-phosphate: step 3/5. Functionally, catalyzes the reversible conversion of 3-phosphohydroxypyruvate to phosphoserine and of 3-hydroxy-2-oxo-4-phosphonooxybutanoate to phosphohydroxythreonine. The polypeptide is Phosphoserine aminotransferase (serC) (Bacillus subtilis (strain 168)).